Here is a 196-residue protein sequence, read N- to C-terminus: uncharacterized protein (196 aa).

In terms of domain architecture, HTH tetR-type spans arginine 7 to tryptophan 67. Residues serine 30–phenylalanine 49 constitute a DNA-binding region (H-T-H motif).

This is an uncharacterized protein from Lactococcus lactis subsp. lactis (Streptococcus lactis).